The primary structure comprises 371 residues: Integrator complex assembly factor WDR73 (371 aa).

WD repeat units follow at residues 81 to 121 (FSDR…DVIE), 273 to 313 (SPDP…GKKT), and 333 to 371 (DSAP…LQAS).

The protein belongs to the WD repeat WDR73 family. Interacts with INTS9 and INTS11; the interaction is direct. Part of the multiprotein complex composed of BRAT1, WDR73, as well as integrator complex subunits INTS9 and INTS11.

It localises to the cytoplasm. It is found in the cytoskeleton. The protein localises to the spindle. The protein resides in the spindle pole. Its subcellular location is the cleavage furrow. In terms of biological role, component of a multiprotein complex required for the assembly of the RNA endonuclease module of the integrator complex. Associates with INTS9 and INTS11 in the cytoplasm, stabilizing the INTS9-INTS11 heterodimer and blocking the active site of INTS11. BRAT1 then joins the complex and plugs the active site of INTS11, leading to WDR73 release and nuclear import of INTS9 and INTS11. This chain is Integrator complex assembly factor WDR73 (Wdr73), found in Mus musculus (Mouse).